A 154-amino-acid chain; its full sequence is CASP-like protein 5B2 (154 aa).

Topologically, residues 1–17 (MAGLAGRPGSWGGLVLR) are cytoplasmic. The helical transmembrane segment at 18 to 38 (VGQALFAAACIGVMGSSLGFA) threads the bilayer. Topologically, residues 39–42 (SYTA) are extracellular. Residues 43–63 (FCYLIASMGLQMLWSFGLACL) form a helical membrane-spanning segment. Over 64–87 (DGYAIRANKDLTSPILLSLFVVGD) the chain is Cytoplasmic. A helical transmembrane segment spans residues 88–107 (WVTAILSFAASSSAAGVVIL). The Extracellular segment spans residues 108–130 (FQKDVLFCRRYPQLPCGKYELAT). Residues 131-151 (AFAFLSWALSATSALIMFWLL) traverse the membrane as a helical segment. Over 152–154 (AAF) the chain is Cytoplasmic.

The protein belongs to the Casparian strip membrane proteins (CASP) family. As to quaternary structure, homodimer and heterodimers.

The protein resides in the cell membrane. This Zea mays (Maize) protein is CASP-like protein 5B2.